The sequence spans 358 residues: Photosystem II protein D1 2 (358 aa).

A run of 3 helical transmembrane segments spans residues 28–45 (YVGW…AATI), 117–132 (HFLI…QWEL), and 141–155 (WICV…AAMA). His-117 lines the chlorophyll a pocket. Residue Tyr-125 participates in pheophytin a binding. 2 residues coordinate [CaMn4O5] cluster: Asp-169 and Glu-188. The helical transmembrane segment at 196–217 (FHMLGVAGVFGGSLFSAMHGSL) threads the bilayer. A chlorophyll a-binding site is contributed by His-197. A quinone is bound by residues His-214 and 263–264 (SF). Position 214 (His-214) interacts with Fe cation. Position 271 (His-271) interacts with Fe cation. The chain crosses the membrane as a helical span at residues 273–287 (FLGAWPVVGIWFTSM). [CaMn4O5] cluster-binding residues include His-331, Glu-332, Asp-341, and Ala-343. Positions 344–358 (TVESTPVALQAPAIG) are excised as a propeptide.

Belongs to the reaction center PufL/M/PsbA/D family. In terms of assembly, PSII is composed of 1 copy each of membrane proteins PsbA, PsbB, PsbC, PsbD, PsbE, PsbF, PsbH, PsbI, PsbJ, PsbK, PsbL, PsbM, PsbT, PsbX, PsbY, PsbZ, Psb30/Ycf12, peripheral proteins PsbO, CyanoQ (PsbQ), PsbU, PsbV and a large number of cofactors. It forms dimeric complexes. The cofactor is The D1/D2 heterodimer binds P680, chlorophylls that are the primary electron donor of PSII, and subsequent electron acceptors. It shares a non-heme iron and each subunit binds pheophytin, quinone, additional chlorophylls, carotenoids and lipids. D1 provides most of the ligands for the Mn4-Ca-O5 cluster of the oxygen-evolving complex (OEC). There is also a Cl(-1) ion associated with D1 and D2, which is required for oxygen evolution. The PSII complex binds additional chlorophylls, carotenoids and specific lipids.. In terms of processing, tyr-160 forms a radical intermediate that is referred to as redox-active TyrZ, YZ or Y-Z. C-terminally processed by CtpA; processing is essential to allow assembly of the oxygen-evolving complex and thus photosynthetic growth.

It localises to the cellular thylakoid membrane. It catalyses the reaction 2 a plastoquinone + 4 hnu + 2 H2O = 2 a plastoquinol + O2. In terms of biological role, photosystem II (PSII) is a light-driven water:plastoquinone oxidoreductase that uses light energy to abstract electrons from H(2)O, generating O(2) and a proton gradient subsequently used for ATP formation. It consists of a core antenna complex that captures photons, and an electron transfer chain that converts photonic excitation into a charge separation. The D1/D2 (PsbA/PsbD) reaction center heterodimer binds P680, the primary electron donor of PSII as well as several subsequent electron acceptors. This chain is Photosystem II protein D1 2, found in Parasynechococcus marenigrum (strain WH8102).